The primary structure comprises 620 residues: Palmitoyltransferase ZDHHC17 (620 aa).

The Cytoplasmic portion of the chain corresponds to 1–292 (MADALVGYEK…LKMDKEFRQK (292 aa)). ANK repeat units follow at residues 77–106 (ENVT…IVDQ), 111–140 (LNST…DPSL), 144–173 (EGCS…DVDM), 177–207 (NGMT…SVNL), 212–241 (HKNT…NVDA), and 245–274 (KGET…AKGY). 2 helical membrane-spanning segments follow: residues 293-313 (VMLG…DLDI) and 314-334 (DSWL…QFLS). Over 335-345 (KSFFDHSMHSA) the chain is Cytoplasmic. The helical transmembrane segment at 346 to 366 (LPLGIYLATKFWMYITWFYWF) threads the bilayer. The Lumenal portion of the chain corresponds to 367–369 (WND). The helical transmembrane segment at 370-390 (LPFVTIHLPFLLNSLALFYNF) threads the bilayer. At 391–469 (GKSWKSDPGI…NCVGSGNHRY (79 aa)) the chain is on the cytoplasmic side. One can recognise a DHHC domain in the interval 425–475 (IFCSTCLIRKPIRSKHCAVCNRCIAKFDHHCPWVGNCVGSGNHRYFMGYLF). The active-site S-palmitoyl cysteine intermediate is the Cys455. Residues 470 to 490 (FMGYLFFLLCMICWMMYGCIC) form a helical membrane-spanning segment. Over 491-504 (YWRIHCATSYTKDG) the chain is Lumenal. A helical transmembrane segment spans residues 505 to 524 (FWIYITQIATCSPWMFWMFL). Residues 525 to 620 (NSVFHFMWVA…QTSGSGYQLV (96 aa)) lie on the Cytoplasmic side of the membrane.

It belongs to the DHHC palmitoyltransferase family. AKR/ZDHHC17 subfamily. Post-translationally, autopalmitoylated.

The protein localises to the golgi apparatus membrane. It is found in the cytoplasmic vesicle membrane. The protein resides in the presynaptic cell membrane. The catalysed reaction is L-cysteinyl-[protein] + hexadecanoyl-CoA = S-hexadecanoyl-L-cysteinyl-[protein] + CoA. The enzyme catalyses L-cysteinyl-[protein] + tetradecanoyl-CoA = S-tetradecanoyl-L-cysteinyl-[protein] + CoA. It carries out the reaction L-cysteinyl-[protein] + octadecanoyl-CoA = S-octadecanoyl-L-cysteinyl-[protein] + CoA. Functionally, palmitoyltransferase that catalyzes the addition of palmitate onto various protein substrates and is involved in a variety of cellular processes. Has no stringent fatty acid selectivity and in addition to palmitate can also transfer onto target proteins myristate from tetradecanoyl-CoA and stearate from octadecanoyl-CoA. Plays a role in axonogenesis. This is Palmitoyltransferase ZDHHC17 from Danio rerio (Zebrafish).